The primary structure comprises 199 residues: Replication protein (199 aa).

This sequence belongs to the Gram-positive plasmids replication protein type 2 family.

Is essential for plasmid replication. Nicks the positive strand at the plus origin of replication. The polypeptide is Replication protein (repF) (Staphylococcus aureus).